The chain runs to 493 residues: Glycosyltransferase alg8 (493 aa).

Transmembrane regions (helical) follow at residues 13–32 (GWLF…PTSI), 47–69 (VGIW…LYIV), 380–402 (LTVA…LLWI), and 422–444 (PAYP…YVFF).

It belongs to the glycosyltransferase 2 family.

Its subcellular location is the cell membrane. It participates in glycan biosynthesis; alginate biosynthesis. In terms of biological role, possibly a processive enzyme that polymerizes GDP-mannuronic acid. The polypeptide is Glycosyltransferase alg8 (alg8) (Pseudomonas syringae pv. tomato (strain ATCC BAA-871 / DC3000)).